Reading from the N-terminus, the 122-residue chain is Large ribosomal subunit protein uL14 (122 aa).

The protein belongs to the universal ribosomal protein uL14 family. Part of the 50S ribosomal subunit. Forms a cluster with proteins L3 and L19. In the 70S ribosome, L14 and L19 interact and together make contacts with the 16S rRNA in bridges B5 and B8.

Functionally, binds to 23S rRNA. Forms part of two intersubunit bridges in the 70S ribosome. The protein is Large ribosomal subunit protein uL14 of Shouchella clausii (strain KSM-K16) (Alkalihalobacillus clausii).